The sequence spans 152 residues: Aspartate 1-decarboxylase (152 aa).

The Schiff-base intermediate with substrate; via pyruvic acid role is filled by S24. S24 bears the Pyruvic acid (Ser) mark. T56 serves as a coordination point for substrate. Catalysis depends on Y57, which acts as the Proton donor. Residue 72 to 74 participates in substrate binding; that stretch reads GAA.

This sequence belongs to the PanD family. As to quaternary structure, heterooctamer of four alpha and four beta subunits. Pyruvate serves as cofactor. Is synthesized initially as an inactive proenzyme, which is activated by self-cleavage at a specific serine bond to produce a beta-subunit with a hydroxyl group at its C-terminus and an alpha-subunit with a pyruvoyl group at its N-terminus.

Its subcellular location is the cytoplasm. The catalysed reaction is L-aspartate + H(+) = beta-alanine + CO2. Its pathway is cofactor biosynthesis; (R)-pantothenate biosynthesis; beta-alanine from L-aspartate: step 1/1. Catalyzes the pyruvoyl-dependent decarboxylation of aspartate to produce beta-alanine. The polypeptide is Aspartate 1-decarboxylase (Rhodospirillum centenum (strain ATCC 51521 / SW)).